We begin with the raw amino-acid sequence, 187 residues long: MILKFGIERILSSPYPCPSPTISTPATSPSSISPTFASPNGTPNIASSMYPAWVFSTRYSDRPSAGPRHRKSRKRESTGSSGSSEEEKRPRTAFTGDQLDRLKTEFRESRYLTEKRRQELAHELGLNESQIKIWFQNKRAKLKKSTSSVPRDRCSSVTPNPHNHPSIHGGYQLMAQLAKVQARAYMP.

3 disordered regions span residues 14–43 (PYPCPSPTISTPATSPSSISPTFASPNGTP), 60–100 (SDRP…DQLD), and 144–167 (KSTSSVPRDRCSSVTPNPHNHPSI). The segment covering 20–39 (PTISTPATSPSSISPTFASP) has biased composition (low complexity). A DNA-binding region (homeobox) is located at residues 87 to 146 (EKRPRTAFTGDQLDRLKTEFRESRYLTEKRRQELAHELGLNESQIKIWFQNKRAKLKKST). Positions 145–163 (STSSVPRDRCSSVTPNPHN) are enriched in polar residues.

This sequence belongs to the engrailed homeobox family. As to expression, expressed in seam cells.

Its subcellular location is the nucleus. The protein resides in the cytoplasm. Functionally, transcriptional regulator which binds to DNA to regulate gene expression and promote seam cell development and differentiation during embryogenesis. Plays a role in maintaining the boundaries between the lateral rows of seam cells and the ventral and dorsal row of epidermal cells during embryonic development. Negatively regulates the expression of the fusion effector protein eff-1 to prevent seam cell fusion with the dorsal and ventral epidermal cells during embryonic elongation. Positively regulates seam cell self-renewal and expansion during the L2 larval stage to promote seam cell development. This role does not seem to be via regulation of eff-1 expression. Specifically, it is required for the asymmetric division of the V5.p seam cell during the L2 larval stage, and in turn the asymmetric nuclear distribution of pop-1 in V5.p daughter cells. The protein is Homeobox protein engrailed-like ceh-16 of Caenorhabditis elegans.